We begin with the raw amino-acid sequence, 239 residues long: Octanoyltransferase (239 aa).

The 189-residue stretch at 48–236 folds into the BPL/LPL catalytic domain; sequence EGGDELVWLV…AFETVFGETT (189 aa). Substrate is bound by residues 87 to 94, 167 to 169, and 180 to 182; these read RGGEYTYH, ALG, and GLS. Cys198 (acyl-thioester intermediate) is an active-site residue.

Belongs to the LipB family.

It is found in the cytoplasm. It carries out the reaction octanoyl-[ACP] + L-lysyl-[protein] = N(6)-octanoyl-L-lysyl-[protein] + holo-[ACP] + H(+). The protein operates within protein modification; protein lipoylation via endogenous pathway; protein N(6)-(lipoyl)lysine from octanoyl-[acyl-carrier-protein]: step 1/2. Its function is as follows. Catalyzes the transfer of endogenously produced octanoic acid from octanoyl-acyl-carrier-protein onto the lipoyl domains of lipoate-dependent enzymes. Lipoyl-ACP can also act as a substrate although octanoyl-ACP is likely to be the physiological substrate. In Rhizobium etli (strain ATCC 51251 / DSM 11541 / JCM 21823 / NBRC 15573 / CFN 42), this protein is Octanoyltransferase.